Consider the following 118-residue polypeptide: Small ribosomal subunit protein uS13 (118 aa).

The interval 94–118 (SLPVRGQRTKTNARTRKGPRKPIKK) is disordered.

This sequence belongs to the universal ribosomal protein uS13 family. As to quaternary structure, part of the 30S ribosomal subunit. Forms a loose heterodimer with protein S19. Forms two bridges to the 50S subunit in the 70S ribosome.

Functionally, located at the top of the head of the 30S subunit, it contacts several helices of the 16S rRNA. In the 70S ribosome it contacts the 23S rRNA (bridge B1a) and protein L5 of the 50S subunit (bridge B1b), connecting the 2 subunits; these bridges are implicated in subunit movement. Contacts the tRNAs in the A and P-sites. This chain is Small ribosomal subunit protein uS13, found in Actinobacillus pleuropneumoniae serotype 5b (strain L20).